Reading from the N-terminus, the 238-residue chain is Ribosomal RNA small subunit methyltransferase G (238 aa).

S-adenosyl-L-methionine contacts are provided by residues G106, L111, 157-158 (IE), and R170.

The protein belongs to the methyltransferase superfamily. RNA methyltransferase RsmG family.

Its subcellular location is the cytoplasm. It catalyses the reaction guanosine(527) in 16S rRNA + S-adenosyl-L-methionine = N(7)-methylguanosine(527) in 16S rRNA + S-adenosyl-L-homocysteine. Functionally, specifically methylates the N7 position of guanine in position 527 of 16S rRNA. The chain is Ribosomal RNA small subunit methyltransferase G from Psychrobacter cryohalolentis (strain ATCC BAA-1226 / DSM 17306 / VKM B-2378 / K5).